A 687-amino-acid polypeptide reads, in one-letter code: Glycine--tRNA ligase beta subunit (687 aa).

Belongs to the class-II aminoacyl-tRNA synthetase family. Tetramer of two alpha and two beta subunits.

The protein localises to the cytoplasm. It catalyses the reaction tRNA(Gly) + glycine + ATP = glycyl-tRNA(Gly) + AMP + diphosphate. This is Glycine--tRNA ligase beta subunit from Citrifermentans bemidjiense (strain ATCC BAA-1014 / DSM 16622 / JCM 12645 / Bem) (Geobacter bemidjiensis).